Reading from the N-terminus, the 412-residue chain is Multifunctional CCA protein (412 aa).

Positions 8 and 11 each coordinate ATP. CTP is bound by residues Gly8 and Arg11. 2 residues coordinate Mg(2+): Asp21 and Asp23. The ATP site is built by Arg91, Arg137, and Arg140. Arg91, Arg137, and Arg140 together coordinate CTP. An HD domain is found at 225–326 (TGIHVMMVID…ADMLQATDAY (102 aa)).

It belongs to the tRNA nucleotidyltransferase/poly(A) polymerase family. Bacterial CCA-adding enzyme type 1 subfamily. As to quaternary structure, monomer. Can also form homodimers and oligomers. Mg(2+) is required as a cofactor. It depends on Ni(2+) as a cofactor.

It carries out the reaction a tRNA precursor + 2 CTP + ATP = a tRNA with a 3' CCA end + 3 diphosphate. It catalyses the reaction a tRNA with a 3' CCA end + 2 CTP + ATP = a tRNA with a 3' CCACCA end + 3 diphosphate. Catalyzes the addition and repair of the essential 3'-terminal CCA sequence in tRNAs without using a nucleic acid template. Adds these three nucleotides in the order of C, C, and A to the tRNA nucleotide-73, using CTP and ATP as substrates and producing inorganic pyrophosphate. tRNA 3'-terminal CCA addition is required both for tRNA processing and repair. Also involved in tRNA surveillance by mediating tandem CCA addition to generate a CCACCA at the 3' terminus of unstable tRNAs. While stable tRNAs receive only 3'-terminal CCA, unstable tRNAs are marked with CCACCA and rapidly degraded. This is Multifunctional CCA protein from Nitrosomonas eutropha (strain DSM 101675 / C91 / Nm57).